The sequence spans 165 residues: Large ribosomal subunit protein uL5 (165 aa).

The protein belongs to the universal ribosomal protein uL5 family. Part of the 50S ribosomal subunit; contacts the 5S rRNA and probably tRNA. Forms a bridge to the 30S subunit in the 70S ribosome.

Functionally, this is one of the proteins that bind and probably mediate the attachment of the 5S RNA into the large ribosomal subunit, where it forms part of the central protuberance. In the 70S ribosome it contacts protein S13 of the 30S subunit (bridge B1b), connecting the 2 subunits; this bridge is implicated in subunit movement. May contact the P site tRNA; the 5S rRNA and some of its associated proteins might help stabilize positioning of ribosome-bound tRNAs. In Methanosarcina acetivorans (strain ATCC 35395 / DSM 2834 / JCM 12185 / C2A), this protein is Large ribosomal subunit protein uL5.